A 414-amino-acid polypeptide reads, in one-letter code: Dual-specificity RNA methyltransferase RlmN (414 aa).

Over residues 1-20 (MMSTPETATEATAPEAAPAP) the composition is skewed to low complexity. Residues 1 to 24 (MMSTPETATEATAPEAAPAPSLGA) form a disordered region. Glu129 (proton acceptor) is an active-site residue. Positions 135 to 385 (ESDRGTLCVS…VRTPRGRDIL (251 aa)) constitute a Radical SAM core domain. Cys142 and Cys388 are oxidised to a cystine. 3 residues coordinate [4Fe-4S] cluster: Cys149, Cys153, and Cys156. S-adenosyl-L-methionine contacts are provided by residues 214-215 (GE), Ser246, 268-270 (SLH), and Asn345. Cys388 functions as the S-methylcysteine intermediate in the catalytic mechanism.

It belongs to the radical SAM superfamily. RlmN family. Requires [4Fe-4S] cluster as cofactor.

It localises to the cytoplasm. It catalyses the reaction adenosine(2503) in 23S rRNA + 2 reduced [2Fe-2S]-[ferredoxin] + 2 S-adenosyl-L-methionine = 2-methyladenosine(2503) in 23S rRNA + 5'-deoxyadenosine + L-methionine + 2 oxidized [2Fe-2S]-[ferredoxin] + S-adenosyl-L-homocysteine. The catalysed reaction is adenosine(37) in tRNA + 2 reduced [2Fe-2S]-[ferredoxin] + 2 S-adenosyl-L-methionine = 2-methyladenosine(37) in tRNA + 5'-deoxyadenosine + L-methionine + 2 oxidized [2Fe-2S]-[ferredoxin] + S-adenosyl-L-homocysteine. In terms of biological role, specifically methylates position 2 of adenine 2503 in 23S rRNA and position 2 of adenine 37 in tRNAs. m2A2503 modification seems to play a crucial role in the proofreading step occurring at the peptidyl transferase center and thus would serve to optimize ribosomal fidelity. This chain is Dual-specificity RNA methyltransferase RlmN, found in Xanthobacter autotrophicus (strain ATCC BAA-1158 / Py2).